A 117-amino-acid polypeptide reads, in one-letter code: Large ribosomal subunit protein bL20 (117 aa).

The protein belongs to the bacterial ribosomal protein bL20 family.

Functionally, binds directly to 23S ribosomal RNA and is necessary for the in vitro assembly process of the 50S ribosomal subunit. It is not involved in the protein synthesizing functions of that subunit. This chain is Large ribosomal subunit protein bL20, found in Rickettsia akari (strain Hartford).